We begin with the raw amino-acid sequence, 236 residues long: Orotidine 5'-phosphate decarboxylase (236 aa).

Substrate-binding positions include Asp17, Lys39, 66-75 (DLKFHDIPNT), Thr125, Arg186, Gln195, Gly215, and Arg216. The active-site Proton donor is the Lys68.

This sequence belongs to the OMP decarboxylase family. Type 1 subfamily. In terms of assembly, homodimer.

It carries out the reaction orotidine 5'-phosphate + H(+) = UMP + CO2. The protein operates within pyrimidine metabolism; UMP biosynthesis via de novo pathway; UMP from orotate: step 2/2. Its function is as follows. Catalyzes the decarboxylation of orotidine 5'-monophosphate (OMP) to uridine 5'-monophosphate (UMP). In Buchnera aphidicola subsp. Acyrthosiphon pisum (strain 5A), this protein is Orotidine 5'-phosphate decarboxylase.